The sequence spans 513 residues: MSLAWRNLQKPFYLETSLRILQMRPSLSLGASRIAVPKLTLHTKHSMPPCDFSPEKYQSLAYSRVLAIHKQHLSPVDTAYFRKPLLLHQGHMEWLFDSEGNRYLDFFSGIVTVSVGHCHPKVSAVAKKQIDRLWHTSSVFFHSPMHEYAEKLSALLPEPLKVIFLVNSGSEANDLAMVMARAHSNHTDIISFRGAYHGCSPYTLGLTNVGIYKMEVPGGIGCQSTMCPDVFRGPWGGIHCRDSPVQTVRDCSCAPDCCQAKERYIEQFKDTLNTSVATSIAGFFAEPIQGVNGVVQYPKEFLKEAFALVRERGGVCIADEVQTGFGRLGSHFWGFQTHDVLPDIVTMAKGIGNGFPMAAVVTTPEIAKSLAKRLLHFSTFGGNPLACAIGSAVLEVIEEENLQRNSQEVGTYMLLKFAKLRDEFDIVGDVRGKGLMVGIEMVQDKISRQPLPKTEVNQIHEDCKDMGLLVGRGGNFSQTFRIVPPMCVTKMEVDFAYEVFRAALIQHMERRAK.

The transit peptide at Met-1 to Thr-40 directs the protein to the mitochondrion. An N6-acetyllysine modification is found at Lys-56. Lys-70 is modified (N6-acetyllysine; alternate). Position 70 is an N6-succinyllysine; alternate (Lys-70). Position 83 is an N6-acetyllysine (Lys-83). Residue Lys-261 is modified to N6-acetyllysine; alternate. Lys-261 bears the N6-succinyllysine; alternate mark. Lys-303 is subject to N6-succinyllysine. Lys-349 carries the N6-(pyridoxal phosphate)lysine modification. Lys-416 and Lys-419 each carry N6-acetyllysine; alternate. Residues Lys-416 and Lys-419 each carry the N6-succinyllysine; alternate modification. Lys-453 carries the N6-acetyllysine modification.

This sequence belongs to the class-III pyridoxal-phosphate-dependent aminotransferase family. Homotetramer. It depends on pyridoxal 5'-phosphate as a cofactor. Expressed in the liver and kidney.

Its subcellular location is the mitochondrion. It carries out the reaction glyoxylate + L-alanine = glycine + pyruvate. The enzyme catalyses (R)-3-amino-2-methylpropanoate + pyruvate = 2-methyl-3-oxopropanoate + L-alanine. It catalyses the reaction 3-oxopropanoate + L-alanine = beta-alanine + pyruvate. The catalysed reaction is 2-oxobutanoate + L-alanine = (2S)-2-aminobutanoate + pyruvate. It carries out the reaction N(omega),N(omega)-dimethyl-L-arginine + pyruvate = 5-(3,3-dimethylguanidino)-2-oxopentanoate + L-alanine. The enzyme catalyses N(omega),N('omega)-dimethyl-L-arginine + pyruvate = 5-(3,3'-dimethylguanidino)-2-oxopentanoate + L-alanine. It catalyses the reaction N(omega),N(omega)-dimethyl-L-arginine + glyoxylate = 5-(3,3-dimethylguanidino)-2-oxopentanoate + glycine. The catalysed reaction is N(omega),N('omega)-dimethyl-L-arginine + glyoxylate = 5-(3,3'-dimethylguanidino)-2-oxopentanoate + glycine. It carries out the reaction N(omega)-methyl-L-arginine + pyruvate = 5-(3-methylguanidino)-2-oxopentanoate + L-alanine. The enzyme catalyses N(omega)-methyl-L-arginine + glyoxylate = 5-(3-methylguanidino)-2-oxopentanoate + glycine. It catalyses the reaction L-ornithine + pyruvate = 5-amino-2-oxopentanoate + L-alanine. The catalysed reaction is L-ornithine + glyoxylate = 5-amino-2-oxopentanoate + glycine. It carries out the reaction (2S)-2-aminobutanoate + glyoxylate = 2-oxobutanoate + glycine. The enzyme catalyses N(omega),N(omega)-dimethyl-L-arginine + oxaloacetate = 5-(3,3-dimethylguanidino)-2-oxopentanoate + L-aspartate. It catalyses the reaction oxaloacetate + L-alanine = L-aspartate + pyruvate. The catalysed reaction is N(omega),N(omega)-dimethyl-L-arginine + 2-oxobutanoate = 5-(3,3-dimethylguanidino)-2-oxopentanoate + (2S)-2-aminobutanoate. It carries out the reaction 2-oxopentanoate + N(omega),N(omega)-dimethyl-L-arginine = 5-(3,3-dimethylguanidino)-2-oxopentanoate + L-2-aminopentanoate. The enzyme catalyses 2-oxohexanoate + N(omega),N(omega)-dimethyl-L-arginine = L-2-aminohexanoate + 5-(3,3-dimethylguanidino)-2-oxopentanoate. With respect to regulation, (R)-3-amino-2-methylpropionate--pyruvate transaminase and beta-alanine-pyruvate aminotransferase are inhibited by aminooxyacetic acid. Multifunctional aminotransferase with a broad substrate specificity. Catalyzes the conversion of glyoxylate to glycine using alanine as the amino donor. Catalyzes metabolism of not L- but the D-isomer of D-beta-aminoisobutyric acid to generate 2-methyl-3-oxopropanoate and alanine. Catalyzes the transfer of the amino group from beta-alanine to pyruvate to yield L-alanine and 3-oxopropanoate. Can metabolize NG-monomethyl-L-arginine (NMMA), asymmetric NG,NG-dimethyl-L-arginine (ADMA) and symmetric NG,N'G-dimethyl-L-arginine (SDMA). ADMA is a potent inhibitor of nitric-oxide (NO) synthase, and this activity provides mechanism through which the kidney regulates blood pressure. This Mus musculus (Mouse) protein is Alanine--glyoxylate aminotransferase 2, mitochondrial (Agxt2).